The chain runs to 200 residues: Probable molybdenum cofactor guanylyltransferase (200 aa).

GTP contacts are provided by residues 9 to 11 (LAG), Lys-21, Asp-69, and Asp-100. Position 100 (Asp-100) interacts with Mg(2+).

The protein belongs to the MobA family. It depends on Mg(2+) as a cofactor.

The protein localises to the cytoplasm. It carries out the reaction Mo-molybdopterin + GTP + H(+) = Mo-molybdopterin guanine dinucleotide + diphosphate. Functionally, transfers a GMP moiety from GTP to Mo-molybdopterin (Mo-MPT) cofactor (Moco or molybdenum cofactor) to form Mo-molybdopterin guanine dinucleotide (Mo-MGD) cofactor. The polypeptide is Probable molybdenum cofactor guanylyltransferase (Bacillus mycoides (strain KBAB4) (Bacillus weihenstephanensis)).